Consider the following 86-residue polypeptide: Large ribosomal subunit protein uL23 (86 aa).

Belongs to the universal ribosomal protein uL23 family. As to quaternary structure, part of the 50S ribosomal subunit. Contacts protein L29.

Its function is as follows. Binds to 23S rRNA. One of the proteins that surrounds the polypeptide exit tunnel on the outside of the ribosome. The sequence is that of Large ribosomal subunit protein uL23 from Methanococcus maripaludis (strain DSM 14266 / JCM 13030 / NBRC 101832 / S2 / LL).